The sequence spans 103 residues: Somatostatin-2 (103 aa).

The first 21 residues, methionine 1 to serine 21, serve as a signal peptide directing secretion. A propeptide spanning residues glutamine 22–glutamate 87 is cleaved from the precursor. The cysteines at positions 92 and 103 are disulfide-linked.

This sequence belongs to the somatostatin family.

It localises to the secreted. In terms of biological role, somatostatin inhibits the release of somatotropin. This is Somatostatin-2 (sst2) from Pelophylax ridibundus (Marsh frog).